The chain runs to 172 residues: Adenine phosphoribosyltransferase (172 aa).

The protein belongs to the purine/pyrimidine phosphoribosyltransferase family. Homodimer.

It is found in the cytoplasm. The catalysed reaction is AMP + diphosphate = 5-phospho-alpha-D-ribose 1-diphosphate + adenine. Its pathway is purine metabolism; AMP biosynthesis via salvage pathway; AMP from adenine: step 1/1. Its function is as follows. Catalyzes a salvage reaction resulting in the formation of AMP, that is energically less costly than de novo synthesis. In Roseiflexus sp. (strain RS-1), this protein is Adenine phosphoribosyltransferase.